The primary structure comprises 570 residues: Periplasmic trehalase (570 aa).

Positions methionine 1–alanine 34 are cleaved as a signal peptide. Substrate contacts are provided by residues arginine 159, tryptophan 166–aspartate 167, asparagine 203, arginine 212–glutamine 214, arginine 284–glutamate 286, and glycine 317. Residues aspartate 319 and glutamate 503 each act as proton donor/acceptor in the active site. Residue glutamate 518 participates in substrate binding. Positions lysine 544–glutamine 570 are disordered. Positions proline 554–glutamine 570 are enriched in low complexity.

It belongs to the glycosyl hydrolase 37 family. In terms of assembly, monomer.

The protein resides in the periplasm. The catalysed reaction is alpha,alpha-trehalose + H2O = alpha-D-glucose + beta-D-glucose. Its function is as follows. Provides the cells with the ability to utilize trehalose at high osmolarity by splitting it into glucose molecules that can subsequently be taken up by the phosphotransferase-mediated uptake system. The polypeptide is Periplasmic trehalase (Salmonella choleraesuis (strain SC-B67)).